Here is a 56-residue protein sequence, read N- to C-terminus: MARAPQPRRGPAAPGNALRALLRCNLPPGAQRVVVSAVLALLVLINVVLIFLLAFR.

A helical membrane pass occupies residues 33–53 (VVVSAVLALLVLINVVLIFLL).

The protein resides in the membrane. This Homo sapiens (Human) protein is Small integral membrane protein 39.